A 478-amino-acid polypeptide reads, in one-letter code: Protein nucleotidyltransferase YdiU (478 aa).

ATP-binding residues include Gly-84, Gly-86, Arg-87, Lys-107, Asp-119, Gly-120, Arg-170, and Arg-177. The active-site Proton acceptor is Asp-246. Mg(2+) is bound by residues Asn-247 and Asp-256. Asp-256 serves as a coordination point for ATP.

It belongs to the SELO family. Requires Mg(2+) as cofactor. The cofactor is Mn(2+).

It catalyses the reaction L-seryl-[protein] + ATP = 3-O-(5'-adenylyl)-L-seryl-[protein] + diphosphate. It carries out the reaction L-threonyl-[protein] + ATP = 3-O-(5'-adenylyl)-L-threonyl-[protein] + diphosphate. The enzyme catalyses L-tyrosyl-[protein] + ATP = O-(5'-adenylyl)-L-tyrosyl-[protein] + diphosphate. The catalysed reaction is L-histidyl-[protein] + UTP = N(tele)-(5'-uridylyl)-L-histidyl-[protein] + diphosphate. It catalyses the reaction L-seryl-[protein] + UTP = O-(5'-uridylyl)-L-seryl-[protein] + diphosphate. It carries out the reaction L-tyrosyl-[protein] + UTP = O-(5'-uridylyl)-L-tyrosyl-[protein] + diphosphate. In terms of biological role, nucleotidyltransferase involved in the post-translational modification of proteins. It can catalyze the addition of adenosine monophosphate (AMP) or uridine monophosphate (UMP) to a protein, resulting in modifications known as AMPylation and UMPylation. This Escherichia coli O9:H4 (strain HS) protein is Protein nucleotidyltransferase YdiU.